Consider the following 147-residue polypeptide: Antiholin-like protein LrgA (147 aa).

A run of 4 helical transmembrane segments spans residues 12–32 (PAHF…SKII), 35–55 (FMPI…VLLC), 74–94 (NIGL…GVIS), and 98–118 (FLII…TGYV).

It belongs to the CidA/LrgA family. LrgA subfamily.

It is found in the cell membrane. Functionally, inhibits the expression or activity of extracellular murein hydrolases by interacting, possibly with LrgB, with the holin-like proteins CidA and/or CidB. The LrgAB and CidAB proteins may affect the proton motive force of the membrane. May be involved in programmed cell death (PCD), possibly triggering PCD in response to antibiotics and environmental stresses. This is Antiholin-like protein LrgA from Staphylococcus aureus (strain USA300).